Consider the following 823-residue polypeptide: Ciliated left-right organizer ZP-N domains-containing protein (823 aa).

An N-terminal signal peptide occupies residues 1 to 22; it reads MWGSPALAWAVWLACVQPTVFP. Disordered stretches follow at residues 206–242, 269–422, 434–520, and 632–656; these read MGLYVDMNATTVTVQSPRQGLLQRWEVLNTSAELLPL, LVHI…DLLH, GPFL…SPSP, and LPREGARGHMDLSSSEPSQDIEGPG. The segment covering 216–230 has biased composition (pro residues); that stretch reads TVTVQSPRQGLLQRW. Over residues 389–402 the composition is skewed to low complexity; that stretch reads GPETPPAGVPPAAS.

The protein localises to the secreted. Functionally, plays a role in left-right patterning process. The polypeptide is Ciliated left-right organizer ZP-N domains-containing protein (Homo sapiens (Human)).